Reading from the N-terminus, the 123-residue chain is Dihydroneopterin triphosphate 2'-epimerase (123 aa).

It belongs to the DHNA family. As to quaternary structure, homooctamer. Dimer of tetramers.

It catalyses the reaction 7,8-dihydroneopterin 3'-triphosphate = 7,8-dihydromonapterin 3'-triphosphate. Its function is as follows. Catalyzes the epimerization of carbon 2' of the side chain of 7,8-dihydroneopterin triphosphate (H2NTP) to form 7,8-dihydromonapterin triphosphate (H2MTP). Is required for tetrahydromonapterin biosynthesis. This Pseudomonas aeruginosa (strain ATCC 15692 / DSM 22644 / CIP 104116 / JCM 14847 / LMG 12228 / 1C / PRS 101 / PAO1) protein is Dihydroneopterin triphosphate 2'-epimerase.